The primary structure comprises 215 residues: Large ribosomal subunit protein uL1 (215 aa).

Belongs to the universal ribosomal protein uL1 family. In terms of assembly, part of the 50S ribosomal subunit.

In terms of biological role, binds directly to 23S rRNA. Probably involved in E site tRNA release. Functionally, protein L1 is also a translational repressor protein, it controls the translation of its operon by binding to its mRNA. The protein is Large ribosomal subunit protein uL1 of Archaeoglobus fulgidus (strain ATCC 49558 / DSM 4304 / JCM 9628 / NBRC 100126 / VC-16).